A 313-amino-acid polypeptide reads, in one-letter code: Protein HEXIM2 (313 aa).

Polar residues predominate over residues 1–13 (MATVNHTNCNTAS). A disordered region spans residues 1–78 (MATVNHTNCN…RGSRTQSPGG (78 aa)). A phosphoserine mark is found at Ser28, Ser52, Ser75, and Ser80. Polar residues predominate over residues 64–77 (SSCNIRGSRTQSPG). Disordered stretches follow at residues 111–139 (EKQQ…PLAP), 155–194 (PNLD…DFSE), and 267–313 (QENE…AGDR). The segment covering 112-131 (KQQRDERQSQRASRVREEMF) has biased composition (basic and acidic residues). An interaction with P-TEFb region spans residues 139–142 (PYNT). Residues 179–194 (GQGRAHGEFQQRDFSE) show a composition bias toward basic and acidic residues. Residues 207–276 (RSKQELVRDY…QENEMWNREG (70 aa)) are a coiled coil. Residues 225-286 (QAEQETRRLR…GYCDQEKPAS (62 aa)) are interaction with CCNT1, HEXIM1 and HEXIM2.

This sequence belongs to the HEXIM family. As to quaternary structure, homooligomer and heterooligomer with HEXIM1; probably dimeric. Core component of the 7SK RNP complex, at least composed of 7SK RNA, LARP7, MEPCE, HEXIM1 (or HEXIM2) and P-TEFb (composed of CDK9 and CCNT1/cyclin-T1). Interacts with CCNT2.

The protein localises to the nucleus. Functionally, transcriptional regulator which functions as a general RNA polymerase II transcription inhibitor. Core component of the 7SK RNP complex: in cooperation with 7SK snRNA sequesters P-TEFb in a large inactive 7SK snRNP complex preventing RNA polymerase II phosphorylation and subsequent transcriptional elongation. The chain is Protein HEXIM2 (Hexim2) from Mus musculus (Mouse).